Here is a 307-residue protein sequence, read N- to C-terminus: Small ribosomal subunit biogenesis GTPase RsgA (307 aa).

The 158-residue stretch at 80–237 folds into the CP-type G domain; that stretch reads KADLRQTIVS…IVDTPGIKEF (158 aa). Residues 129-132 and 180-188 contribute to the GTP site; these read NKID and GQSGVGKSS. 4 residues coordinate Zn(2+): Cys261, Cys266, His268, and Cys274.

Belongs to the TRAFAC class YlqF/YawG GTPase family. RsgA subfamily. In terms of assembly, monomer. Associates with 30S ribosomal subunit, binds 16S rRNA. The cofactor is Zn(2+).

It localises to the cytoplasm. Its function is as follows. One of several proteins that assist in the late maturation steps of the functional core of the 30S ribosomal subunit. Helps release RbfA from mature subunits. May play a role in the assembly of ribosomal proteins into the subunit. Circularly permuted GTPase that catalyzes slow GTP hydrolysis, GTPase activity is stimulated by the 30S ribosomal subunit. The polypeptide is Small ribosomal subunit biogenesis GTPase RsgA (Borreliella burgdorferi (strain ATCC 35210 / DSM 4680 / CIP 102532 / B31) (Borrelia burgdorferi)).